We begin with the raw amino-acid sequence, 142 residues long: Hemoglobin subunit alpha-B (142 aa).

The region spanning 2 to 142 (VLSPTDKSNV…VSTVLTSKYR (141 aa)) is the Globin domain. An O2-binding site is contributed by His59. His88 serves as a coordination point for heme b.

This sequence belongs to the globin family. As to quaternary structure, heterotetramer of two alpha chains and two beta chains. Red blood cells.

In terms of biological role, involved in oxygen transport from the lung to the various peripheral tissues. The sequence is that of Hemoglobin subunit alpha-B (HBAB) from Otolemur crassicaudatus (Brown greater galago).